The following is a 276-amino-acid chain: Large ribosomal subunit protein uL2 (276 aa).

The tract at residues proline 218 to leucine 255 is disordered.

It belongs to the universal ribosomal protein uL2 family. Part of the 50S ribosomal subunit. Forms a bridge to the 30S subunit in the 70S ribosome.

Its function is as follows. One of the primary rRNA binding proteins. Required for association of the 30S and 50S subunits to form the 70S ribosome, for tRNA binding and peptide bond formation. It has been suggested to have peptidyltransferase activity; this is somewhat controversial. Makes several contacts with the 16S rRNA in the 70S ribosome. This Clostridium tetani (strain Massachusetts / E88) protein is Large ribosomal subunit protein uL2.